The following is a 388-amino-acid chain: AdoMet-dependent heme synthase (388 aa).

Residues 1 to 12 (MHNANHPHGNGH) are compositionally biased toward low complexity. The disordered stretch occupies residues 1-29 (MHNANHPHGNGHPAEKKGMGAHSGAMNMP). The Radical SAM core domain occupies 34-257 (DGSPACRLIA…TSMHLKATCA (224 aa)). Residues cysteine 50, cysteine 54, and cysteine 57 each coordinate [4Fe-4S] cluster.

Belongs to the radical SAM superfamily. It depends on [4Fe-4S] cluster as a cofactor.

It carries out the reaction Fe-coproporphyrin III + 2 S-adenosyl-L-methionine = heme b + 2 5'-deoxyadenosine + 2 L-methionine + 2 CO2. It participates in porphyrin-containing compound metabolism; protoheme biosynthesis. Functionally, involved in siroheme-dependent heme b biosynthesis. Catalyzes the conversion of Fe-coproporphyrin III into heme by the oxidative decarboxylation of two propionate side chains. In Oleidesulfovibrio alaskensis (strain ATCC BAA-1058 / DSM 17464 / G20) (Desulfovibrio alaskensis), this protein is AdoMet-dependent heme synthase.